Here is a 711-residue protein sequence, read N- to C-terminus: Long-chain-fatty-acid--CoA ligase 4 (711 aa).

The chain crosses the membrane as a helical; Signal-anchor for type III membrane protein span at residues 8-28 (LTIVLLPVHLLITIYSALIFI). Topologically, residues 29–711 (PWYFLTNAKK…KDIERMYGGK (683 aa)) are cytoplasmic. Residue Ser-447 is modified to Phosphoserine.

It belongs to the ATP-dependent AMP-binding enzyme family. Mg(2+) serves as cofactor.

It is found in the mitochondrion outer membrane. The protein resides in the peroxisome membrane. It localises to the microsome membrane. The protein localises to the endoplasmic reticulum membrane. Its subcellular location is the cell membrane. It catalyses the reaction a long-chain fatty acid + ATP + CoA = a long-chain fatty acyl-CoA + AMP + diphosphate. It carries out the reaction (5Z,8Z,11Z,14Z)-eicosatetraenoate + ATP + CoA = (5Z,8Z,11Z,14Z)-eicosatetraenoyl-CoA + AMP + diphosphate. The catalysed reaction is 15-hydroxy-(5Z,8Z,11Z,13E)-eicosatetraenoate + ATP + CoA = 15-hydroxy-(5Z,8Z,11Z,13E)-eicosatetraenoyl-CoA + AMP + diphosphate. The enzyme catalyses 12-hydroxy-(5Z,8Z,10E,14Z)-eicosatetraenoate + ATP + CoA = 12-hydroxy-(5Z,8Z,10E,14Z)-eicosatetraenoyl-CoA + AMP + diphosphate. It catalyses the reaction 5-hydroxy-(6E,8Z,11Z,14Z)-eicosatetraenoate + ATP + CoA = 5-hydroxy-(6E,8Z,11Z,14Z)-eicosatetraenoyl-CoA + AMP + diphosphate. It carries out the reaction 5,6-epoxy-(8Z,11Z,14Z)-eicosatrienoate + ATP + CoA = 5,6-epoxy-(8Z,11Z,14Z)-eicosatrienoyl-CoA + AMP + diphosphate. The catalysed reaction is 14,15-epoxy-(5Z,8Z,11Z)-eicosatrienoate + ATP + CoA = 14,15-epoxy-(5Z,8Z,11Z)-eicosatrienoyl-CoA + AMP + diphosphate. The enzyme catalyses 11,12-epoxy-(5Z,8Z,14Z)-eicosatrienoate + ATP + CoA = 11,12-epoxy-(5Z,8Z,14Z)-eicosatrienoyl-CoA + AMP + diphosphate. It catalyses the reaction 8,9-epoxy-(5Z,11Z,14Z)-eicosatrienoate + ATP + CoA = 8,9-epoxy-(5Z,11Z,14Z)-eicosatrienoyl-CoA + AMP + diphosphate. It carries out the reaction hexadecanoate + ATP + CoA = hexadecanoyl-CoA + AMP + diphosphate. The catalysed reaction is (E)-hexadec-2-enoate + ATP + CoA = (2E)-hexadecenoyl-CoA + AMP + diphosphate. Both triacsin C and rosiglitazone inhibit arachidonoyl-CoA ligase activity. In terms of biological role, catalyzes the conversion of long-chain fatty acids to their active form acyl-CoA for both synthesis of cellular lipids, and degradation via beta-oxidation. Preferentially activates arachidonate and eicosapentaenoate as substrates. Preferentially activates 8,9-EET &gt; 14,15-EET &gt; 5,6-EET &gt; 11,12-EET. Modulates glucose-stimulated insulin secretion by regulating the levels of unesterified EETs. Modulates prostaglandin E2 secretion. The sequence is that of Long-chain-fatty-acid--CoA ligase 4 (Acsl4) from Rattus norvegicus (Rat).